A 300-amino-acid chain; its full sequence is Cation-efflux pump FieF (300 aa).

Residues 24 to 44 form a helical membrane-spanning segment; sequence LLIKIFAWWYTGSVSILAALV. Positions 45 and 49 each coordinate Zn(2+). The next 2 helical transmembrane spans lie at 82 to 102 and 114 to 134; these read AALAQSMFISGSALFLFLTSI and PGVGIGVTVIALICTIILVTF. Histidine 153 and aspartate 157 together coordinate Zn(2+). 2 helical membrane passes run 156–176 and 178–198; these read SDVMMNGAILIALGLSWYGWH and ADALFALGIGIYILYSALRMG.

It belongs to the cation diffusion facilitator (CDF) transporter (TC 2.A.4) family. FieF subfamily. As to quaternary structure, homodimer.

It is found in the cell inner membrane. The enzyme catalyses Zn(2+)(in) + H(+)(out) = Zn(2+)(out) + H(+)(in). It carries out the reaction Cd(2+)(in) + H(+)(out) = Cd(2+)(out) + H(+)(in). It catalyses the reaction Fe(2+)(in) + H(+)(out) = Fe(2+)(out) + H(+)(in). Divalent metal cation transporter which exports Zn(2+), Cd(2+) and possibly Fe(2+). May be involved in zinc and iron detoxification by efflux. The protein is Cation-efflux pump FieF of Salmonella enteritidis PT4 (strain P125109).